An 89-amino-acid polypeptide reads, in one-letter code: Small ribosomal subunit protein uS15 (89 aa).

It belongs to the universal ribosomal protein uS15 family. Part of the 30S ribosomal subunit. Forms a bridge to the 50S subunit in the 70S ribosome, contacting the 23S rRNA.

Functionally, one of the primary rRNA binding proteins, it binds directly to 16S rRNA where it helps nucleate assembly of the platform of the 30S subunit by binding and bridging several RNA helices of the 16S rRNA. In terms of biological role, forms an intersubunit bridge (bridge B4) with the 23S rRNA of the 50S subunit in the ribosome. This is Small ribosomal subunit protein uS15 from Lacticaseibacillus casei (strain BL23) (Lactobacillus casei).